The sequence spans 148 residues: Protein NrdI (148 aa).

Belongs to the NrdI family.

Probably involved in ribonucleotide reductase function. The protein is Protein NrdI of Mycolicibacterium gilvum (strain PYR-GCK) (Mycobacterium gilvum (strain PYR-GCK)).